We begin with the raw amino-acid sequence, 304 residues long: uncharacterized protein (304 aa).

It belongs to the mimivirus L137 family.

This is an uncharacterized protein from Acanthamoeba polyphaga mimivirus (APMV).